Reading from the N-terminus, the 672-residue chain is DNA ligase (672 aa).

NAD(+) contacts are provided by residues 32 to 36 (DEKYD), 82 to 83 (SL), and Glu113. Residue Lys115 is the N6-AMP-lysine intermediate of the active site. Residues Arg136, Glu173, Lys290, and Lys314 each coordinate NAD(+). Zn(2+) is bound by residues Cys408, Cys411, Cys427, and Cys433. Residues 592-672 (DNNNTLFRKK…EFLNIINVYL (81 aa)) enclose the BRCT domain.

It belongs to the NAD-dependent DNA ligase family. LigA subfamily. Mg(2+) serves as cofactor. The cofactor is Mn(2+).

The catalysed reaction is NAD(+) + (deoxyribonucleotide)n-3'-hydroxyl + 5'-phospho-(deoxyribonucleotide)m = (deoxyribonucleotide)n+m + AMP + beta-nicotinamide D-nucleotide.. DNA ligase that catalyzes the formation of phosphodiester linkages between 5'-phosphoryl and 3'-hydroxyl groups in double-stranded DNA using NAD as a coenzyme and as the energy source for the reaction. It is essential for DNA replication and repair of damaged DNA. This is DNA ligase from Buchnera aphidicola subsp. Baizongia pistaciae (strain Bp).